The sequence spans 206 residues: ATP phosphoribosyltransferase (206 aa).

The protein belongs to the ATP phosphoribosyltransferase family. Short subfamily. Heteromultimer composed of HisG and HisZ subunits.

The protein resides in the cytoplasm. The enzyme catalyses 1-(5-phospho-beta-D-ribosyl)-ATP + diphosphate = 5-phospho-alpha-D-ribose 1-diphosphate + ATP. It functions in the pathway amino-acid biosynthesis; L-histidine biosynthesis; L-histidine from 5-phospho-alpha-D-ribose 1-diphosphate: step 1/9. Catalyzes the condensation of ATP and 5-phosphoribose 1-diphosphate to form N'-(5'-phosphoribosyl)-ATP (PR-ATP). Has a crucial role in the pathway because the rate of histidine biosynthesis seems to be controlled primarily by regulation of HisG enzymatic activity. This is ATP phosphoribosyltransferase from Campylobacter curvus (strain 525.92).